The primary structure comprises 284 residues: Nucleotide-binding protein Sden_0486 (284 aa).

Position 8 to 15 (8 to 15 (GRSGSGKS)) interacts with ATP. 56 to 59 (DVRN) contacts GTP.

This sequence belongs to the RapZ-like family.

In terms of biological role, displays ATPase and GTPase activities. The chain is Nucleotide-binding protein Sden_0486 from Shewanella denitrificans (strain OS217 / ATCC BAA-1090 / DSM 15013).